A 238-amino-acid chain; its full sequence is Ribonuclease PH (238 aa).

Phosphate contacts are provided by residues Arg-86 and 124–126 (GTR).

Belongs to the RNase PH family. Homohexameric ring arranged as a trimer of dimers.

The catalysed reaction is tRNA(n+1) + phosphate = tRNA(n) + a ribonucleoside 5'-diphosphate. Its function is as follows. Phosphorolytic 3'-5' exoribonuclease that plays an important role in tRNA 3'-end maturation. Removes nucleotide residues following the 3'-CCA terminus of tRNAs; can also add nucleotides to the ends of RNA molecules by using nucleoside diphosphates as substrates, but this may not be physiologically important. Probably plays a role in initiation of 16S rRNA degradation (leading to ribosome degradation) during starvation. This is Ribonuclease PH from Salmonella gallinarum (strain 287/91 / NCTC 13346).